Here is a 253-residue protein sequence, read N- to C-terminus: Proproteinase E (253 aa).

Positions 1–11 are cleaved as a propeptide — activation peptide; sequence FSQPFSRPSSR. In terms of domain architecture, Peptidase S1 spans 12–251; it reads VVNGEDAVPY…FIDWIDETIA (240 aa). 5 disulfide bridges follow: Cys-41–Cys-57, Cys-100–Cys-103, Cys-140–Cys-206, Cys-171–Cys-187, and Cys-196–Cys-227.

Belongs to the peptidase S1 family. Monomer. The zymogen is secreted as a ternary complex composed of procarboxypeptidase A, chymotrypsinogen C and proproteinase E. In terms of tissue distribution, pancreas.

It is found in the secreted. The protein localises to the extracellular space. In terms of biological role, may protect procarboxypeptidase A against denaturation in the acidic environment of the ruminant duodenum. This chain is Proproteinase E, found in Bos taurus (Bovine).